Consider the following 230-residue polypeptide: MKVGIIGAMEQEVALLRSQMNEPTTLQLGGCEFYQGKLAGKEVILTRSGIGKVAASVATSLLLEKFAPDCVINTGSAGGFAQDLHIGDMVIADEMRFHDVDVTAFGYEMGQMAQQPAAFPCDGKLIAVAQDCIAEQGKHQTKVGLICTGDQFMCKPDAIAKARADFPQMLAVEMEGAAIGQVCHMFKVPYLVVRAMSDIAGKEQVESFDAFIEVAGQHSAEMIIKMLGKL.

Glutamate 12 serves as the catalytic Proton acceptor. Residues glycine 78, methionine 153, and 174-175 (ME) each bind substrate. Residue aspartate 198 is the Proton donor of the active site.

It belongs to the PNP/UDP phosphorylase family. MtnN subfamily.

The enzyme catalyses S-adenosyl-L-homocysteine + H2O = S-(5-deoxy-D-ribos-5-yl)-L-homocysteine + adenine. The catalysed reaction is S-methyl-5'-thioadenosine + H2O = 5-(methylsulfanyl)-D-ribose + adenine. It carries out the reaction 5'-deoxyadenosine + H2O = 5-deoxy-D-ribose + adenine. Its pathway is amino-acid biosynthesis; L-methionine biosynthesis via salvage pathway; S-methyl-5-thio-alpha-D-ribose 1-phosphate from S-methyl-5'-thioadenosine (hydrolase route): step 1/2. Its function is as follows. Catalyzes the irreversible cleavage of the glycosidic bond in both 5'-methylthioadenosine (MTA) and S-adenosylhomocysteine (SAH/AdoHcy) to adenine and the corresponding thioribose, 5'-methylthioribose and S-ribosylhomocysteine, respectively. Also cleaves 5'-deoxyadenosine, a toxic by-product of radical S-adenosylmethionine (SAM) enzymes, into 5-deoxyribose and adenine. This chain is 5'-methylthioadenosine/S-adenosylhomocysteine nucleosidase, found in Aeromonas salmonicida (strain A449).